Consider the following 86-residue polypeptide: High affinity immunoglobulin epsilon receptor subunit gamma (86 aa).

Positions 1-18 (MIPAVVLLLLLLVEQAAA) are cleaved as a signal peptide. Over 19 to 23 (LGEPQ) the chain is Extracellular. Residues 24–44 (LCYILDAILFLYGIVLTLLYC) form a helical membrane-spanning segment. At 45–86 (RLKIQVRKAAIASYEKSDGVYTGLSTRNQETYETLKHEKPPQ) the chain is on the cytoplasmic side. An ITAM domain is found at 54-82 (AIASYEKSDGVYTGLSTRNQETYETLKHE). Y65 bears the Phosphotyrosine mark. The residue at position 69 (S69) is a Phosphoserine. The residue at position 76 (Y76) is a Phosphotyrosine. T78 carries the phosphothreonine modification.

Belongs to the CD3Z/FCER1G family. In terms of assembly, igE Fc receptor is a tetramer of an alpha chain, a beta chain, and two disulfide linked gamma chains. Associates with FCGR1A; forms a functional signaling complex. The signaling subunit of immunoglobulin gamma (IgG) Fc receptor complex. As a homodimer or a heterodimer of CD247 and FCER1G, associates with the ligand binding subunit FCGR3A to form a functional receptor complex. Associates with CLEC6A. Interacts with CLEC4E. Interacts (via ITAM domain) with SYK (via SH2 domains); activates SYK, enabling integrin-mediated activation of neutrophils and macrophages. Interacts with CSF2RB and recruits SYK in response to IL3 stimulation; this interaction is direct. Interacts with CD300LH; the interaction may be indirect. Interacts with CD300LD. Interacts with TARM1.

Its subcellular location is the cell membrane. In terms of biological role, adapter protein containing an immunoreceptor tyrosine-based activation motif (ITAM) that transduces activation signals from various immunoreceptors. As a component of the high-affinity immunoglobulin E (IgE) receptor, mediates allergic inflammatory signaling in mast cells. As a constitutive component of interleukin-3 receptor complex, selectively mediates interleukin 4/IL4 production by basophils priming T-cells toward effector T-helper 2 subset. Associates with pattern recognition receptors CLEC4D and CLEC4E to form a functional signaling complex in myeloid cells. Binding of mycobacterial trehalose 6,6'-dimycolate (TDM) to this receptor complex leads to phosphorylation of ITAM, triggering activation of SYK, CARD9 and NF-kappa-B, consequently driving maturation of antigen-presenting cells and shaping antigen-specific priming of T-cells toward effector T-helper 1 and T-helper 17 cell subtypes. May function cooperatively with other activating receptors. Functionally linked to integrin beta-2/ITGB2-mediated neutrophil activation. Also involved in integrin alpha-2/ITGA2-mediated platelet activation. The protein is High affinity immunoglobulin epsilon receptor subunit gamma (FCER1G) of Macaca fascicularis (Crab-eating macaque).